We begin with the raw amino-acid sequence, 395 residues long: DNA primase small subunit PriS (395 aa).

Catalysis depends on residues Asp-95, Asp-97, and Asp-302.

It belongs to the eukaryotic-type primase small subunit family. Heterodimer of a small subunit (PriS) and a large subunit (PriL). Mg(2+) is required as a cofactor. Requires Mn(2+) as cofactor.

Catalytic subunit of DNA primase, an RNA polymerase that catalyzes the synthesis of short RNA molecules used as primers for DNA polymerase during DNA replication. The small subunit contains the primase catalytic core and has DNA synthesis activity on its own. Binding to the large subunit stabilizes and modulates the activity, increasing the rate of DNA synthesis while decreasing the length of the DNA fragments, and conferring RNA synthesis capability. The DNA polymerase activity may enable DNA primase to also catalyze primer extension after primer synthesis. May also play a role in DNA repair. This chain is DNA primase small subunit PriS, found in Methanothrix thermoacetophila (strain DSM 6194 / JCM 14653 / NBRC 101360 / PT) (Methanosaeta thermophila).